A 157-amino-acid chain; its full sequence is SsrA-binding protein (157 aa).

The disordered stretch occupies residues 135 to 157; it reads KRDTIKDREGKREVERAMKTNHR.

The protein belongs to the SmpB family.

The protein localises to the cytoplasm. Required for rescue of stalled ribosomes mediated by trans-translation. Binds to transfer-messenger RNA (tmRNA), required for stable association of tmRNA with ribosomes. tmRNA and SmpB together mimic tRNA shape, replacing the anticodon stem-loop with SmpB. tmRNA is encoded by the ssrA gene; the 2 termini fold to resemble tRNA(Ala) and it encodes a 'tag peptide', a short internal open reading frame. During trans-translation Ala-aminoacylated tmRNA acts like a tRNA, entering the A-site of stalled ribosomes, displacing the stalled mRNA. The ribosome then switches to translate the ORF on the tmRNA; the nascent peptide is terminated with the 'tag peptide' encoded by the tmRNA and targeted for degradation. The ribosome is freed to recommence translation, which seems to be the essential function of trans-translation. This Albidiferax ferrireducens (strain ATCC BAA-621 / DSM 15236 / T118) (Rhodoferax ferrireducens) protein is SsrA-binding protein.